Reading from the N-terminus, the 315-residue chain is MSQSLRIVFAGTPDFAARHLAALLSSEHEIIAVYTQPERPAGRGKKLTASPVKTLALEHNVPVYQPENFKSDESKQQLAALNADLMVVVAYGLLLPKVVLDTPKLGCINVHGSILPRWRGAAPIQRSIWAGDSETGVTIMQMDVGLDTGDMLKIATLPIEASDTSASMYDKLAELGPQALLECLQDIAQGTAVAVKQDDGLANYAHKLSKEEARINWSDAATHIERCIRAFNPWPMSHFEVAENSIKVWQARVETRAVTQTPGTIIQADKSGIYVATGQDVLVLESLQIPGKKALPVQDILNARADWFSVGSQLS.

113–116 (SILP) lines the (6S)-5,6,7,8-tetrahydrofolate pocket.

Belongs to the Fmt family.

It carries out the reaction L-methionyl-tRNA(fMet) + (6R)-10-formyltetrahydrofolate = N-formyl-L-methionyl-tRNA(fMet) + (6S)-5,6,7,8-tetrahydrofolate + H(+). In terms of biological role, attaches a formyl group to the free amino group of methionyl-tRNA(fMet). The formyl group appears to play a dual role in the initiator identity of N-formylmethionyl-tRNA by promoting its recognition by IF2 and preventing the misappropriation of this tRNA by the elongation apparatus. In Vibrio cholerae serotype O1 (strain ATCC 39541 / Classical Ogawa 395 / O395), this protein is Methionyl-tRNA formyltransferase.